The sequence spans 103 residues: Large ribosomal subunit protein bL21 (103 aa).

The protein belongs to the bacterial ribosomal protein bL21 family. Part of the 50S ribosomal subunit. Contacts protein L20.

Functionally, this protein binds to 23S rRNA in the presence of protein L20. This is Large ribosomal subunit protein bL21 from Shigella sonnei (strain Ss046).